Reading from the N-terminus, the 169-residue chain is Putative antitoxin Rv0268c (169 aa).

The segment covering 1–11 (MGTRSKSRTRQ) has biased composition (basic residues). Positions 1-35 (MGTRSKSRTRQLKQSNGCTATTSGASDRRRRARRR) are disordered. The stretch at 120–153 (AAILISAERYESLMEELEDLRDRLSVHEREHVTM) forms a coiled coil.

This sequence belongs to the phD/YefM antitoxin family.

Functionally, putative antitoxin component of a type II toxin-antitoxin (TA) system; however the expected toxin coding sequence is not found adjacent to this gene. The protein is Putative antitoxin Rv0268c of Mycobacterium tuberculosis (strain ATCC 25618 / H37Rv).